The chain runs to 428 residues: Glutamate-1-semialdehyde 2,1-aminomutase 1 (428 aa).

Lys-267 is subject to N6-(pyridoxal phosphate)lysine.

Belongs to the class-III pyridoxal-phosphate-dependent aminotransferase family. HemL subfamily. As to quaternary structure, homodimer. Pyridoxal 5'-phosphate is required as a cofactor.

It localises to the cytoplasm. The catalysed reaction is (S)-4-amino-5-oxopentanoate = 5-aminolevulinate. It functions in the pathway porphyrin-containing compound metabolism; protoporphyrin-IX biosynthesis; 5-aminolevulinate from L-glutamyl-tRNA(Glu): step 2/2. The polypeptide is Glutamate-1-semialdehyde 2,1-aminomutase 1 (Staphylococcus aureus (strain bovine RF122 / ET3-1)).